The sequence spans 95 residues: uncharacterized protein (95 aa).

Positions 60–89 (VKNMINRIVEELDKRIDEIKEGLNELEKSG) form a coiled coil.

This is an uncharacterized protein from Sulfolobus islandicus filamentous virus (isolate Iceland/Hveragerdi) (SIFV).